Here is a 926-residue protein sequence, read N- to C-terminus: Progesterone receptor (926 aa).

The segment at 1–48 (MTELQAKDPQVLHTSGASPSPPHIGSPLLARLDSGPFQGSQHSDVSSV) is disordered. An AF3; mediates transcriptional activation (in isoform B) region spans residues 1 to 165 (MTELQAKDPQ…PATKGLLSPL (165 aa)). Positions 1–559 (MTELQAKDPQ…YGFDSLPQKI (559 aa)) are modulating, Pro-Rich. A Glycyl lysine isopeptide (Lys-Gly) (interchain with G-Cter in SUMO) cross-link involves residue lysine 7. A Phosphoserine modification is found at serine 20. An LXXL motif 1 motif is present at residues 56-60 (LDGLL). Position 82 is a phosphoserine (serine 82). The LXXL motif 1 motif lies at 116 to 120 (LDSLL). Phosphoserine occurs at positions 131 and 163. The segment at 166 to 305 (MSRPEIKAGD…LATTVVDFIH (140 aa)) is mediates transcriptional transrepression (in isoform A). A disordered region spans residues 168-256 (RPEIKAGDSS…GTGSGGGVAA (89 aa)). The short motif at 184 to 188 (KVLPK) is the Nuclear localization signal element. Phosphoserine is present on residues serine 191 and serine 214. A Phosphoserine; by MAPK1 modification is found at serine 294. The interval 327-364 (DSYDGGATAQGPFAPPRGSPSAPSPPVPCGDFPDCTYP) is disordered. Pro residues predominate over residues 339-354 (FAPPRGSPSAPSPPVP). Residue serine 345 is modified to Phosphoserine; by MAPK. Residue lysine 388 forms a Glycyl lysine isopeptide (Lys-Gly) (interchain with G-Cter in SUMO); alternate linkage. Lysine 388 participates in a covalent cross-link: Glycyl lysine isopeptide (Lys-Gly) (interchain with G-Cter in ubiquitin); alternate. The interval 391–447 (EEGADAAVRSPRPYLSAGASSSTFPDFPLAPAPQRAPSSRPGEAAVAGGPSSAAVSP) is disordered. Serine 400 carries the phosphoserine; by CDK2 modification. A compositionally biased stretch (low complexity) spans 422–447 (APQRAPSSRPGEAAVAGGPSSAAVSP). The tract at residues 453-539 (SALECILYKA…VYPPYLNYLR (87 aa)) is AF1; mediates transcriptional activation. Lysine 524 is covalently cross-linked (Glycyl lysine isopeptide (Lys-Gly) (interchain with G-Cter in SUMO)). The segment at residues 557–632 (QKICLICGDE…AGMVLGGRKF (76 aa)) is a DNA-binding region (nuclear receptor). 2 NR C4-type zinc fingers span residues 560-580 (CLICGDEASGCHYGVLTCGSC) and 596-615 (CAGRNDCIVDKIRRKNCPAC). Serine 669 carries the phosphoserine modification. Positions 672–906 (QEIQLVPPLI…EFPEMMSEVI (235 aa)) constitute an NR LBD domain. The segment at 673-926 (EIQLVPPLIN…MVKPLLFHKK (254 aa)) is AF2; mediates transcriptional activation. Arginine 759 contacts progesterone.

It belongs to the nuclear hormone receptor family. NR3 subfamily. Interacts with SMARD1 and UNC45A. Interacts with CUEDC2; the interaction promotes ubiquitination, decreases sumoylation, and represses transcriptional activity. Interacts with PIAS3; the interaction promotes sumoylation of PR in a hormone-dependent manner, inhibits DNA-binding, and alters nuclear export. Interacts with SP1; the interaction requires ligand-induced phosphorylation on Ser-294 by ERK1/2 MAPK. Interacts with PRMT2. Isoform A interacts with NCOR2. Isoform B (but not isoform A) interacts with NCOA2 and NCOA1. Isoform B (but not isoform A) interacts with KLF9. In terms of processing, phosphorylated on multiple serine sites. Several of these sites are hormone-dependent. Phosphorylation on Ser-294 is highly hormone-dependent and modulates ubiquitination and sumoylation on Lys-388. Phosphorylation on Ser-345 also requires induction by hormone. Basal phosphorylation on Ser-82, Ser-163, Ser-191 and Ser-400 is increased in response to progesterone and can be phosphorylated in vitro by the CDK2-A1 complex. Increased levels of phosphorylation on Ser-400 also in the presence of EGF, heregulin, IGF, PMA and FBS. Phosphorylation at this site by CDK2 is ligand-independent, and increases nuclear translocation and transcriptional activity. Phosphorylation at Ser-163 and Ser-294, but not at Ser-191, is impaired during the G(2)/M phase of the cell cycle. Phosphorylation on Ser-345 by ERK1/2 MAPK is required for interaction with SP1. Sumoylation is hormone-dependent and represses transcriptional activity. Sumoylation on all three sites is enhanced by PIAS3. Desumoylated by SENP1. Sumoylation on Lys-388, the main site of sumoylation, is repressed by ubiquitination on the same site, and modulated by phosphorylation at Ser-294. Post-translationally, ubiquitination is hormone-dependent and represses sumoylation on the same site. Promoted by MAPK-mediated phosphorylation on Ser-294. Ubiquitinated by UBR5, leading to its degradation: UBR5 specifically recognizes and binds ligand-bound PGR when it is not associated with coactivators (NCOAs). In presence of NCOAs, the UBR5-degron is not accessible, preventing its ubiquitination and degradation. In terms of processing, palmitoylated by ZDHHC7 and ZDHHC21. Palmitoylation is required for plasma membrane targeting and for rapid intracellular signaling via ERK and AKT kinases and cAMP generation. As to expression, expression of isoform A and isoform B in mammary epithelial cells is temporally and spatially separated during normal mammary gland development. Isoform A and isoform B are expressed in the pituitary. Isoform A and isoform B are differentially expressed in the ovary and oviduct, and the level of expression is dependent on both the cell type and estrous cycle stage.

Its subcellular location is the nucleus. The protein localises to the cytoplasm. Functionally, the steroid hormones and their receptors are involved in the regulation of eukaryotic gene expression and affect cellular proliferation and differentiation in target tissues. Depending on the isoform, progesterone receptor functions as a transcriptional activator or repressor. Ligand-dependent transdominant repressor of steroid hormone receptor transcriptional activity including repression of its isoform B, MR and ER. Transrepressional activity may involve recruitment of corepressor NCOR2. In terms of biological role, transcriptional activator of several progesteron-dependent promoters in a variety of cell types. Involved in activation of SRC-dependent MAPK signaling on hormone stimulation. This Mus musculus (Mouse) protein is Progesterone receptor (Pgr).